A 257-amino-acid polypeptide reads, in one-letter code: Folate receptor alpha (257 aa).

An N-terminal signal peptide occupies residues 1 to 24 (MAQRMTTQLLLLLVWVAVVGEAQT). 8 disulfide bridges follow: cysteine 37–cysteine 65, cysteine 57–cysteine 105, cysteine 66–cysteine 109, cysteine 89–cysteine 175, cysteine 96–cysteine 146, cysteine 135–cysteine 209, cysteine 139–cysteine 189, and cysteine 152–cysteine 169. Asparagine 69 is a glycosylation site (N-linked (GlcNAc...) asparagine). Folate-binding positions include aspartate 103, tyrosine 107, 124-128 (WRKER), 157-162 (HKGWNW), and serine 196. An N-linked (GlcNAc...) asparagine glycan is attached at asparagine 161. An N-linked (GlcNAc...) asparagine glycan is attached at asparagine 201. Serine 234 carries the GPI-anchor amidated serine lipid modification. Residues 235-257 (GAGPWAAWPFLLSLALMLLWLLS) constitute a propeptide, removed in mature form.

The protein belongs to the folate receptor family. In terms of processing, the secreted form is derived from the membrane-bound form either by cleavage of the GPI anchor, or/and by proteolysis catalyzed by a metalloprotease. As to expression, primarily expressed in tissues of epithelial origin. Expression is increased in malignant tissues. Expressed in kidney, lung and cerebellum. Detected in placenta and thymus epithelium.

It localises to the cell membrane. Its subcellular location is the apical cell membrane. It is found in the basolateral cell membrane. The protein localises to the secreted. The protein resides in the cytoplasmic vesicle. It localises to the clathrin-coated vesicle. Its subcellular location is the endosome. In terms of biological role, binds to folate and reduced folic acid derivatives and mediates delivery of 5-methyltetrahydrofolate and folate analogs into the interior of cells. Has high affinity for folate and folic acid analogs at neutral pH. Exposure to slightly acidic pH after receptor endocytosis triggers a conformation change that strongly reduces its affinity for folates and mediates their release. Required for normal embryonic development and normal cell proliferation. This is Folate receptor alpha (FOLR1) from Homo sapiens (Human).